The primary structure comprises 448 residues: tRNA(Ile)-lysidine synthase (448 aa).

Residue 25 to 30 (SGGSDS) participates in ATP binding.

Belongs to the tRNA(Ile)-lysidine synthase family.

Its subcellular location is the cytoplasm. The enzyme catalyses cytidine(34) in tRNA(Ile2) + L-lysine + ATP = lysidine(34) in tRNA(Ile2) + AMP + diphosphate + H(+). Ligates lysine onto the cytidine present at position 34 of the AUA codon-specific tRNA(Ile) that contains the anticodon CAU, in an ATP-dependent manner. Cytidine is converted to lysidine, thus changing the amino acid specificity of the tRNA from methionine to isoleucine. This Brucella canis (strain ATCC 23365 / NCTC 10854 / RM-666) protein is tRNA(Ile)-lysidine synthase.